The primary structure comprises 645 residues: MNASSEGESFAGSVQIPGGTTVLVELTPDIHICGICKQQFNNLDAFVAHKQSGCQLTGTSAAAPSTVQFVSEETVPATQTQTTTRTITSETQTITVSAPEFVFEHGYQTYLPTESNENQTATVISLPAKSRTKKPTTPPAQKRLNCCYPGCQFKTAYGMKDMERHLKIHTGDKPHKCEVCGKCFSRKDKLKTHMRCHTGVKPYKCKTCDYAAADSSSLNKHLRIHSDERPFKCQICPYASRNSSQLTVHLRSHTASELDDDVPKANCLSTESTDTPKAPVITLPSEAREQMATLGERTFNCCYPGCHFKTVHGMKDLDRHLRIHTGDKPHKCEFCDKCFSRKDNLTMHMRCHTSVKPHKCHLCDYAAVDSSSLKKHLRIHSDERPYKCQLCPYASRNSSQLTVHLRSHTGDTPFQCWLCSAKFKISSDLKRHMIVHSGEKPFKCEFCDVRCTMKANLKSHIRIKHTFKCLHCAFQGRDRADLLEHSRLHQADHPEKCPECSYSCSSAAALRVHSRVHCKDRPFKCDFCSFDTKRPSSLAKHVDKVHRDEAKTENRAPLGKEGLREGSSQHVAKIVTQRAFRCETCGASFVRDDSLRCHKKQHSDQSENKNSDLVTFPPESGASGQLSTLVSVGQLEAPLEPSQDL.

3 consecutive C2H2-type zinc fingers follow at residues 175–197 (HKCE…MRCH), 203–225 (YKCK…LRIH), and 231–253 (FKCQ…LRSH). Residue glutamate 286 forms a Glycyl lysine isopeptide (Lys-Gly) (interchain with G-Cter in SUMO2) linkage. The segment at 299–324 (FNCCYPGCHFKTVHGMKDLDRHLRIH) adopts a C2H2-type 4; atypical zinc-finger fold. C2H2-type zinc fingers lie at residues 330–352 (HKCE…MRCH), 358–380 (HKCH…LRIH), 386–408 (YKCQ…LRSH), 414–436 (FQCW…MIVH), 442–465 (FKCE…RIKH), 467–489 (FKCL…SRLH), 495–517 (EKCP…SRVH), 523–546 (FKCD…DKVH), and 580–602 (FRCE…KKQH). Asparagine 397 participates in a covalent cross-link: Glycyl lysine isopeptide (Lys-Gly) (interchain with G-Cter in SUMO2). Basic and acidic residues-rich tracts occupy residues 543–554 (DKVHRDEAKTEN) and 600–610 (KQHSDQSENKN). 2 disordered regions span residues 543–567 (DKVH…REGS) and 600–645 (KQHS…SQDL). Position 545 is a phosphoserine (valine 545). The span at 622–631 (ASGQLSTLVS) shows a compositional bias: polar residues.

This sequence belongs to the krueppel C2H2-type zinc-finger protein family. Interacts with ZNF70; this interaction promote the transactivation of the HES1 gene. Interacts with NOTCH1.

The protein resides in the nucleus. May be involved in the regulation of mesenchymal cell differentiation through transactivation of NOTCH1 target genes. This chain is Zinc finger protein 64, found in Homo sapiens (Human).